The following is a 545-amino-acid chain: CTP synthase (545 aa).

The amidoligase domain stretch occupies residues 1-266 (MTTNYIFVTG…DDYICKRFSL (266 aa)). S14 contributes to the CTP binding site. S14 is a binding site for UTP. ATP is bound by residues 15 to 20 (SLGKGI) and D72. Positions 72 and 140 each coordinate Mg(2+). CTP contacts are provided by residues 147–149 (DIE), 187–192 (KTKPTQ), and K223. Residues 187–192 (KTKPTQ) and K223 each bind UTP. Residue 239-241 (KDV) participates in ATP binding. The region spanning 291-542 (TIGMVGKYIE…VKAASEYQKR (252 aa)) is the Glutamine amidotransferase type-1 domain. G352 contributes to the L-glutamine binding site. C379 acts as the Nucleophile; for glutamine hydrolysis in catalysis. Residues 380 to 383 (LGMQ), E403, and R470 contribute to the L-glutamine site. Active-site residues include H515 and E517.

This sequence belongs to the CTP synthase family. In terms of assembly, homotetramer.

The enzyme catalyses UTP + L-glutamine + ATP + H2O = CTP + L-glutamate + ADP + phosphate + 2 H(+). The catalysed reaction is L-glutamine + H2O = L-glutamate + NH4(+). It carries out the reaction UTP + NH4(+) + ATP = CTP + ADP + phosphate + 2 H(+). Its pathway is pyrimidine metabolism; CTP biosynthesis via de novo pathway; CTP from UDP: step 2/2. With respect to regulation, allosterically activated by GTP, when glutamine is the substrate; GTP has no effect on the reaction when ammonia is the substrate. The allosteric effector GTP functions by stabilizing the protein conformation that binds the tetrahedral intermediate(s) formed during glutamine hydrolysis. Inhibited by the product CTP, via allosteric rather than competitive inhibition. In terms of biological role, catalyzes the ATP-dependent amination of UTP to CTP with either L-glutamine or ammonia as the source of nitrogen. Regulates intracellular CTP levels through interactions with the four ribonucleotide triphosphates. The chain is CTP synthase from Klebsiella pneumoniae subsp. pneumoniae (strain ATCC 700721 / MGH 78578).